A 148-amino-acid polypeptide reads, in one-letter code: MSEQPFWQQKTLDEMTDAEWESLCDGCGQCCLHKLMDEDTDEIYFTNVACRQLNIKTCQCRNYERRFEYEPDCIKLTRENLPTFEWLPPTCAYRLLAEGKSLPAWHPLLTGSKAAMHGERISVRHIAVPESTVVDWQDHILNLPDRAR.

It belongs to the UPF0260 family.

This Klebsiella pneumoniae (strain 342) protein is UPF0260 protein KPK_1978.